A 347-amino-acid chain; its full sequence is Hyaluronidase conohyal-ad1 (347 aa).

A signal peptide spans 1-18 (MRAVVVVTGLVVVVVTTT). The propeptide occupies 19–33 (LSLQDHDVKSASSPL). Residues 27-49 (KSASSPLSSSVDQGSSGDDCDEG) are disordered. Low complexity predominate over residues 28 to 43 (SASSPLSSSVDQGSSG). Cysteines 67 and 343 form a disulfide. The active-site Proton donor is the Glu150.

This sequence belongs to the glycosyl hydrolase 56 family. Contains 4 disulfide bonds. Post-translationally, is N-linked glycosylated at three positions. Expressed by the venom duct.

It localises to the secreted. It catalyses the reaction Random hydrolysis of (1-&gt;4)-linkages between N-acetyl-beta-D-glucosamine and D-glucuronate residues in hyaluronate.. In terms of biological role, hyaluronidase catalyzes the hydrolysis of hyaluronic acid (HA), an anionic, nonsulfated glycosaminoglycan distributed widely throughout connective, epithelial, and neural tissues. In venom, they are known to enhance diffusion of the venom by degrading the extracellular matrix. The sequence is that of Hyaluronidase conohyal-ad1 from Conus adamsonii (Rhododendron cone).